Consider the following 210-residue polypeptide: High mobility group protein B2 (210 aa).

K3 is subject to N6-acetyllysine. A DNA-binding region (HMG box 1) is located at residues 9–79; it reads PRGKMSSYAF…RYDREMKNYV (71 aa). C23 is subject to Cysteine sulfonic acid (-SO3H); alternate. A disulfide bridge connects residues C23 and C45. Position 30 is an N6-acetyllysine (K30). Residue S35 is modified to Phosphoserine. K43 carries the post-translational modification N6-acetyllysine. C45 carries the post-translational modification Cysteine sulfonic acid (-SO3H); alternate. Over residues 51-76 the composition is skewed to basic and acidic residues; the sequence is TMSAKEKSKFEDLAKSDKARYDREMK. A disordered region spans residues 51-102; sequence TMSAKEKSKFEDLAKSDKARYDREMKNYVPPKGDKKGKKKDPNAPKRPPSAF. K90 is modified (N6-acetyllysine). Positions 95–163 form a DNA-binding region, HMG box 2; it reads PKRPPSAFFL…KYEKDIAAYR (69 aa). The residue at position 100 (S100) is a Phosphoserine. A Cysteine sulfonic acid (-SO3H) modification is found at C106. 2 positions are modified to N6-acetyllysine: K114 and K141. Over residues 162-172 the composition is skewed to basic and acidic residues; that stretch reads YRAKGKSEVGK. Residues 162–210 form a disordered region; the sequence is YRAKGKSEVGKKGPGRPTGSKKKNEPEDEEEEEEEEDDEDEEEEDEDEE. The required for chemotactic activity stretch occupies residues 165–180; it reads KGKSEVGKKGPGRPTG. The segment covering 187-210 has biased composition (acidic residues); sequence PEDEEEEEEEEDDEDEEEEDEDEE.

Belongs to the HMGB family. As to quaternary structure, interacts with POU2F2, POU2F1 and POU3F1. Component of the RAG complex composed of core components RAG1 and RAG2, and associated component HMGB1 or HMGB2. Component of the SET complex, composed of at least ANP32A, APEX1, HMGB2, NME1, SET and TREX1. Directly interacts with SET. Interacts with LEF1. Reduction/oxidation of cysteine residues Cys-23, Cys-45 and Cys-106 and a possible intramolecular disulfide bond involving Cys-23 and Cys-45 give rise to different redox forms with specific functional activities in various cellular compartments: 1- fully reduced HMGB2 (HMGB2C23hC45hC106h), 2- disulfide HMGB2 (HMGB2C23-C45C106h) and 3- sulfonyl HMGB2 (HMGB2C23soC45soC106so).

It localises to the nucleus. Its subcellular location is the chromosome. The protein resides in the cytoplasm. It is found in the secreted. Functionally, multifunctional protein with various roles in different cellular compartments. May act in a redox sensitive manner. In the nucleus is an abundant chromatin-associated non-histone protein involved in transcription, chromatin remodeling and V(D)J recombination and probably other processes. Binds DNA with a preference to non-canonical DNA structures such as single-stranded DNA. Can bent DNA and enhance DNA flexibility by looping thus providing a mechanism to promote activities on various gene promoters by enhancing transcription factor binding and/or bringing distant regulatory sequences into close proximity. Involved in V(D)J recombination by acting as a cofactor of the RAG complex: acts by stimulating cleavage and RAG protein binding at the 23 bp spacer of conserved recombination signal sequences (RSS). Proposed to be involved in the innate immune response to nucleic acids by acting as a cytoplasmic promiscuous immunogenic DNA/RNA sensor which cooperates with subsequent discriminative sensing by specific pattern recognition receptors. In the extracellular compartment acts as a chemokine. Promotes proliferation and migration of endothelial cells implicating AGER/RAGE. Has antimicrobial activity in gastrointestinal epithelial tissues. Involved in inflammatory response to antigenic stimulus coupled with pro-inflammatory activity. May play a role in germ cell differentiation. Involved in modulation of neurogenesis probably by regulation of neural stem proliferation. Involved in articular cartilage surface maintenance implicating LEF1 and the Wnt/beta-catenin pathway. The protein is High mobility group protein B2 (Hmgb2) of Rattus norvegicus (Rat).